The primary structure comprises 426 residues: Dihydroorotase (426 aa).

2 residues coordinate Zn(2+): H58 and H60. Substrate is bound by residues 60–62 and N92; that span reads HLR. Residues D150, H177, and H230 each contribute to the Zn(2+) site. Position 276 (N276) interacts with substrate. D303 is a Zn(2+) binding site. Residue D303 is part of the active site. Substrate contacts are provided by residues H307 and 321–322; that span reads FG.

The protein belongs to the metallo-dependent hydrolases superfamily. DHOase family. Class I DHOase subfamily. It depends on Zn(2+) as a cofactor.

It catalyses the reaction (S)-dihydroorotate + H2O = N-carbamoyl-L-aspartate + H(+). It functions in the pathway pyrimidine metabolism; UMP biosynthesis via de novo pathway; (S)-dihydroorotate from bicarbonate: step 3/3. In terms of biological role, catalyzes the reversible cyclization of carbamoyl aspartate to dihydroorotate. The sequence is that of Dihydroorotase from Listeria monocytogenes serotype 4b (strain CLIP80459).